The sequence spans 209 residues: Uracil phosphoribosyltransferase (209 aa).

5-phospho-alpha-D-ribose 1-diphosphate is bound by residues R79, R104, and 131 to 139; that span reads DPMLATGGS. Residues I194 and 199 to 201 contribute to the uracil site; that span reads GDA. D200 lines the 5-phospho-alpha-D-ribose 1-diphosphate pocket.

The protein belongs to the UPRTase family. The cofactor is Mg(2+).

It carries out the reaction UMP + diphosphate = 5-phospho-alpha-D-ribose 1-diphosphate + uracil. It participates in pyrimidine metabolism; UMP biosynthesis via salvage pathway; UMP from uracil: step 1/1. Allosterically activated by GTP. Functionally, catalyzes the conversion of uracil and 5-phospho-alpha-D-ribose 1-diphosphate (PRPP) to UMP and diphosphate. In Bacillus pumilus (strain SAFR-032), this protein is Uracil phosphoribosyltransferase.